Reading from the N-terminus, the 769-residue chain is TSC22 domain family protein 2 (769 aa).

4 disordered regions span residues 20 to 86 (AQVA…TVSP), 224 to 292 (HGLD…PQPM), 334 to 353 (AQPG…YPQP), and 520 to 563 (VPAP…SLPQ). Acidic residues predominate over residues 28-37 (EDTESLDDPD). Residues 229-252 (GTDSSLTAVSQLPPSEKMSQPTLA) are compositionally biased toward polar residues. Over residues 269 to 279 (GGAVAPSSASL) the composition is skewed to low complexity. The segment covering 531 to 541 (SSHTPVSRSSS) has biased composition (low complexity). The span at 542–563 (VIQQVGSPLAQGTHSAPTSLPQ) shows a compositional bias: polar residues. Positions 691 to 725 (MYAVREEVEVLKEQIKELVERNSLLERENALLKSL) form a coiled coil. Over residues 726 to 745 (SNNDQLSQLPAQQANPGSTS) the composition is skewed to polar residues. The disordered stretch occupies residues 726-769 (SNNDQLSQLPAQQANPGSTSQQQAMIAQPPQPTQPPQQPNVSSA). Over residues 754 to 763 (PPQPTQPPQQ) the composition is skewed to pro residues.

The protein belongs to the TSC-22/Dip/Bun family. As to quaternary structure, interacts with NRBP1. Interacts with PKM isoform M2; the interaction results in reduced nuclear levels of PKM isoform M2, leading to repression of cyclin CCND1 transcription and reduced cell growth. Interacts with WDR77. As to expression, expressed in the cortex, medulla and papilla of the kidney. In terms of tissue distribution, expressed in the kidney.

Its function is as follows. Reduces the level of nuclear PKM isoform M2 which results in repression of cyclin CCND1 transcription and reduced cell growth. May protect kidney cells from hyperosmotic stress. In Mus musculus (Mouse), this protein is TSC22 domain family protein 2.